We begin with the raw amino-acid sequence, 195 residues long: Probable GTP-binding protein EngB (195 aa).

The 172-residue stretch at 24 to 195 (GLSEVGLSGR…QIWNVIEKYL (172 aa)) folds into the EngB-type G domain. GTP contacts are provided by residues 32–39 (GRSNVGKS), 59–63 (GKTQT), 77–80 (DVPG), 144–147 (TKED), and 176–178 (YSS). Residues serine 39 and threonine 61 each contribute to the Mg(2+) site.

Belongs to the TRAFAC class TrmE-Era-EngA-EngB-Septin-like GTPase superfamily. EngB GTPase family. The cofactor is Mg(2+).

Necessary for normal cell division and for the maintenance of normal septation. The polypeptide is Probable GTP-binding protein EngB (Staphylococcus saprophyticus subsp. saprophyticus (strain ATCC 15305 / DSM 20229 / NCIMB 8711 / NCTC 7292 / S-41)).